The primary structure comprises 545 residues: Chaperonin GroEL 2 (545 aa).

Residues 30 to 33 (TLGP), Lys51, 87 to 91 (DGTTT), Gly415, and Asp496 contribute to the ATP site.

It belongs to the chaperonin (HSP60) family. In terms of assembly, forms a cylinder of 14 subunits composed of two heptameric rings stacked back-to-back. Interacts with the co-chaperonin GroES.

The protein resides in the cytoplasm. The catalysed reaction is ATP + H2O + a folded polypeptide = ADP + phosphate + an unfolded polypeptide.. Its function is as follows. Together with its co-chaperonin GroES, plays an essential role in assisting protein folding. The GroEL-GroES system forms a nano-cage that allows encapsulation of the non-native substrate proteins and provides a physical environment optimized to promote and accelerate protein folding. The chain is Chaperonin GroEL 2 from Nitrobacter winogradskyi (strain ATCC 25391 / DSM 10237 / CIP 104748 / NCIMB 11846 / Nb-255).